A 1735-amino-acid polypeptide reads, in one-letter code: Inactive tyrosine-protein kinase PEAK1 (1735 aa).

Disordered regions lie at residues 26 to 66 (LHQL…PPVA) and 111 to 145 (LSQK…KISN). 2 stretches are compositionally biased toward polar residues: residues 111 to 121 (LSQKPLNNNSE) and 130 to 145 (DPQQ…KISN). Ser282 carries the post-translational modification Phosphoserine. 3 disordered regions span residues 324-410 (NSGV…SVKV), 491-514 (GRPK…LTPG), and 537-580 (SPRQ…SKTI). Low complexity predominate over residues 325 to 336 (SGVSYGQGSVQS). Residues 337 to 365 (TISSDCTSPGSSFTEESRSETASSLSQKV) show a composition bias toward polar residues. A compositionally biased stretch (low complexity) spans 367 to 378 (NGGISPGNPGNS). The span at 384 to 393 (TESNFESPPG) shows a compositional bias: polar residues. The segment covering 498–509 (SSSTPNSPVTSP) has biased composition (low complexity). Ser537, Ser569, and Ser584 each carry phosphoserine. Positions 566–580 (APTSPTATNISSKTI) are enriched in polar residues. 2 positions are modified to phosphotyrosine: Tyr632 and Tyr638. Ser645 carries the post-translational modification Phosphoserine. Position 662 is a phosphotyrosine (Tyr662). Disordered stretches follow at residues 663–762 (EEIE…REKA), 800–919 (PDAD…AADA), and 1019–1097 (RNSE…SATY). 3 stretches are compositionally biased toward polar residues: residues 704 to 735 (QEFN…QRPT), 745 to 757 (AQGS…SSNS), and 819 to 839 (LFTS…SPTA). 2 positions are modified to phosphoserine: Ser824 and Ser825. Positions 847–863 (TKPVTSPPSKLVTSAQS) are enriched in low complexity. Positions 864 to 873 (EPPPPFPPPR) are enriched in pro residues. Residues 879–901 (YHASNLLQRHFTNWTKPTSPTRS) are compositionally biased toward polar residues. A Phosphoserine modification is found at Ser897. Basic and acidic residues-rich tracts occupy residues 902–919 (TEAE…AADA) and 1037–1055 (ACSR…RDPR). Residues 1076–1086 (EREEEKDDTLD) show a composition bias toward acidic residues. The residue at position 1141 (Thr1141) is a Phosphothreonine. The residue at position 1177 (Tyr1177) is a Phosphotyrosine. The required for homodimerization stretch occupies residues 1274 to 1300 (EVVGKLRSLHTDALKRLAVKCEDLFMA). One can recognise a Protein kinase domain in the interval 1302 to 1664 (QKDQLRFGVD…LLWGPREDLF (363 aa)). Residue Ser1363 is modified to Phosphoserine. The segment at 1394 to 1445 (WEDPDAPEKAEDGTEDSEEEGKAETLGGNPEPCSETEPSQKENQRVTNRKQR) is disordered. The segment at 1659–1732 (PREDLFQIFT…DSLSYIVKIL (74 aa)) is required for homodimerization.

The protein belongs to the protein kinase superfamily. In terms of assembly, homodimer. Interacts with BCAR1 and CRK. Interacts with PRAG1. Interacts (when phosphorylated at Tyr-1177) with SHC1 (via PID domain). Found in a complex with PPP1CA, PPP1CC and SHC1. Interacts (when phosphorylated at Tyr-632) with tensin TNS3 (when phosphorylated on the SH2 domain); TNS3 also interacts with integrins ITGB1, ITGB3 and ITGB5 and mediates their association with PEAK1. Post-translationally, phosphorylated on tyrosine in a CSK-dependent manner in response to adhesion to fibronectin and to EGF stimulation. Phosphorylation at Tyr-662 by a Src family kinase controls subcellular localization to focal adhesion and focal adhesion dynamics. Phosphorylation at Tyr-1177 is essential for binding to SHC1. Phosphorylation at Tyr-632 promotes interaction with tensin TNS3.

It is found in the cytoplasm. It localises to the cytoskeleton. Its subcellular location is the cell junction. The protein localises to the focal adhesion. Its function is as follows. Probable catalytically inactive kinase. Scaffolding protein that regulates the cytoskeleton to control cell spreading and migration by modulating focal adhesion dynamics. Acts as a scaffold for mediating EGFR signaling. The polypeptide is Inactive tyrosine-protein kinase PEAK1 (Peak1) (Mus musculus (Mouse)).